Here is a 479-residue protein sequence, read N- to C-terminus: MPPKGKKGKKGKKLPVLIDGVDTSAMTRDQLEAFALRLKAEMDREREERNYFQLERDKIRTFWEITRQQLDETRYELQQKDKEIEATQDLADIDTKHVMQQMKHLQFENHNRLGEVRAEAMTQLKLAQEHHVLQENELQRDKRQLRRMLRERMEMSEMQLRQMEAHFNEKLLEQRITFERERKDNEMLHEEKMIEQKAKLDLFYGTQMFEVEERKNQQIKDLQDHHDLAFNDMKNYYNDITLNNLALIGSMKEQLEHLRKQAERSDRIAADTAAENRRLKEPLEHANIQLNEYRRKLEFYERDKQQLSRLKTRNTRLEKKVKGLTWEAETLILRNDSLVAEREGLKERFNDVIVELQQKTGLKNVLLERKIAALMREDEKRSIVLHETIATCAPNFAEKLTSLDERVGNIIDEKNKIILDLRYEVTKARKAHDDLLETYECKLKQYGVPTDELGFKPIRNRDQQQLYVCGPAGIITENK.

3 coiled-coil regions span residues Arg-28 to Ile-93, Arg-117 to Lys-170, and Glu-210 to Glu-347.

This sequence belongs to the DRC4 family.

It is found in the cytoplasm. The protein localises to the cytoskeleton. Its subcellular location is the flagellum basal body. In terms of biological role, cytoskeletal linker which probably functions in axonemal and non-axonemal dynein regulation. May play a role in the spermatozoa motility. This chain is Dynein regulatory complex subunit 4, found in Drosophila melanogaster (Fruit fly).